A 92-amino-acid chain; its full sequence is Transcription factor S4 (92 aa).

Positions 1 to 31 (MRFCPKCGSFLKVKGNKMVCSKCGYSDHDVE) are ZR-N. Zn(2+)-binding residues include Cys4, Cys7, Cys20, and Cys23. The tract at residues 32 to 56 (KVILKENVAHENDKTIIADGETIEG) is flexible linker. A ZR-C region spans residues 55-92 (EGRVAISLCPRCGSVRAILLNKKKRLYRCMTCNFVYNI). Zn(2+) contacts are provided by Cys63 and Cys66. Active-site residues include Lys76, Lys77, and Lys78. Residues Cys83 and Cys86 each contribute to the Zn(2+) site.

This sequence belongs to the archaeal RpoM/eukaryotic RPA12/RPB9/RPC11 RNA polymerase family. Interacts with RNA polymerase. Requires Zn(2+) as cofactor.

Functionally, a potent inhibitor of RNA polymerase (RNAP) probably involved in viral defense. Destabilizes the transcription pre-initiation complex of TBP, TFB, DNA and RNAP, inhibits abortive transcription initiation, productive initiation and transcription elongation. Increases the RNAP KM for NTPs about 50-fold. Overexpression of TFS1-tip4 (TFS1 with the active tip of this protein, phenocopies this protein) in S.acidocaldarius MW001 leads to severe growth inhibition. When bound to RNAP induces conformational changes that widen the DNA-binding channel, probably destabilizing the interaction of DNA with RNAP. This Saccharolobus solfataricus (strain ATCC 35092 / DSM 1617 / JCM 11322 / P2) (Sulfolobus solfataricus) protein is Transcription factor S4.